The chain runs to 486 residues: UDP-N-acetylmuramoyl-L-alanyl-D-glutamate--2,6-diaminopimelate ligase (486 aa).

UDP-N-acetyl-alpha-D-muramoyl-L-alanyl-D-glutamate is bound at residue Ser31. 109-115 serves as a coordination point for ATP; the sequence is GTNGKTT. Residues Asn150, 151-152, Ser178, and Arg186 each bind UDP-N-acetyl-alpha-D-muramoyl-L-alanyl-D-glutamate; that span reads TT. Lys218 carries the post-translational modification N6-carboxylysine. Meso-2,6-diaminopimelate is bound by residues Arg381, 405–408, Gly455, and Glu459; that span reads DNPR. Residues 405 to 408 carry the Meso-diaminopimelate recognition motif motif; the sequence is DNPR.

It belongs to the MurCDEF family. MurE subfamily. Mg(2+) serves as cofactor. In terms of processing, carboxylation is probably crucial for Mg(2+) binding and, consequently, for the gamma-phosphate positioning of ATP.

The protein resides in the cytoplasm. The enzyme catalyses UDP-N-acetyl-alpha-D-muramoyl-L-alanyl-D-glutamate + meso-2,6-diaminopimelate + ATP = UDP-N-acetyl-alpha-D-muramoyl-L-alanyl-gamma-D-glutamyl-meso-2,6-diaminopimelate + ADP + phosphate + H(+). The protein operates within cell wall biogenesis; peptidoglycan biosynthesis. Functionally, catalyzes the addition of meso-diaminopimelic acid to the nucleotide precursor UDP-N-acetylmuramoyl-L-alanyl-D-glutamate (UMAG) in the biosynthesis of bacterial cell-wall peptidoglycan. This chain is UDP-N-acetylmuramoyl-L-alanyl-D-glutamate--2,6-diaminopimelate ligase, found in Halalkalibacterium halodurans (strain ATCC BAA-125 / DSM 18197 / FERM 7344 / JCM 9153 / C-125) (Bacillus halodurans).